A 231-amino-acid chain; its full sequence is Putative carboxymethylenebutenolidase (231 aa).

Catalysis depends on residues Asp169 and His200.

This sequence belongs to the dienelactone hydrolase family.

The enzyme catalyses 2-(5-oxo-2,5-dihydrofuran-2-ylidene)acetate + H2O = 4-oxohex-2-enedioate + H(+). This Azospirillum brasilense protein is Putative carboxymethylenebutenolidase.